The sequence spans 215 residues: Heart- and neural crest derivatives-expressed protein 1 (215 aa).

Disordered stretches follow at residues 53-109 and 166-198; these read APDF…RTES and LKKA…EKRI. Low complexity predominate over residues 65-89; it reads AAAAATAYGPDARPGQSPGRLEALG. The segment covering 92–104 has biased composition (basic residues); sequence LGRRKGSGPKKER. The bHLH domain occupies 94 to 146; the sequence is RRKGSGPKKERRRTESINSAFAELRECIPNVPADTKLSKIKTLRLATSYIAYL. T107 is subject to Phosphothreonine; by PLK4. Phosphoserine; by PLK4 is present on S109.

In terms of assembly, efficient DNA binding requires dimerization with another bHLH protein. Forms homodimers and heterodimers with TCF3 gene products E12 and E47, HAND2 and HEY1, HEY2 and HEYL (hairy-related transcription factors). Interacts with MDFIC. Interacts with SOX15; the interaction enhances HAND1-induced differentiation of trophoblast giant cells. Post-translationally, phosphorylation by PLK4 disrupts the interaction with MDFIC and leads to translocation into the nucleoplasm, allowing dimerization and transcription factor activity. As to expression, heart.

It localises to the nucleus. The protein resides in the nucleoplasm. It is found in the nucleolus. Its function is as follows. Transcription factor that plays an essential role in both trophoblast giant cell differentiation and in cardiac morphogenesis. Binds the DNA sequence 5'-NRTCTG-3' (non-canonical E-box). Acts as a transcriptional repressor of SOX15. In the adult, could be required for ongoing expression of cardiac-specific genes. The protein is Heart- and neural crest derivatives-expressed protein 1 (HAND1) of Homo sapiens (Human).